Here is a 190-residue protein sequence, read N- to C-terminus: uncharacterized protein (190 aa).

Disordered stretches follow at residues 1–21 (MALR…ATVG) and 155–190 (PEMG…TQAS). Residues 181-190 (SPSSHPTQAS) are compositionally biased toward low complexity.

This is an uncharacterized protein from Homo sapiens (Human).